A 175-amino-acid chain; its full sequence is Co-chaperone protein HscB homolog (175 aa).

The J domain maps to 8–80 (DFFSLFGLPR…LNRARYLLQL (73 aa)).

It belongs to the HscB family. As to quaternary structure, interacts with HscA and stimulates its ATPase activity.

Functionally, co-chaperone involved in the maturation of iron-sulfur cluster-containing proteins. Seems to help targeting proteins to be folded toward HscA. This chain is Co-chaperone protein HscB homolog, found in Chromobacterium violaceum (strain ATCC 12472 / DSM 30191 / JCM 1249 / CCUG 213 / NBRC 12614 / NCIMB 9131 / NCTC 9757 / MK).